A 150-amino-acid polypeptide reads, in one-letter code: MQVILLDKIGNLGGLGDTVNVKSGYARNFLIPQGKAVMATKGNVEMFEARRAELEAKVAEQLAAAEARAEKVNALEAVVLASKAGDEGKLFGSIGTRDIAEAITAAGVEVAKSEVRLPEGALRNTGEFEISVQLHSEVFATINLQVVAAE.

The protein belongs to the bacterial ribosomal protein bL9 family.

Binds to the 23S rRNA. The sequence is that of Large ribosomal subunit protein bL9 from Vibrio campbellii (strain ATCC BAA-1116).